The sequence spans 320 residues: Cytochrome f (320 aa).

An N-terminal signal peptide occupies residues 1–35 (MQTRKTLSWIKEEITRSISLSLMLSIITHASLSNA). The heme site is built by Tyr36, Cys56, Cys59, and His60. A helical membrane pass occupies residues 286 to 306 (VQGLLFFLTSVLLAQIFLVLK).

Belongs to the cytochrome f family. In terms of assembly, the 4 large subunits of the cytochrome b6-f complex are cytochrome b6, subunit IV (17 kDa polypeptide, petD), cytochrome f and the Rieske protein, while the 4 small subunits are PetG, PetL, PetM and PetN. The complex functions as a dimer. Requires heme as cofactor.

The protein resides in the plastid. The protein localises to the chloroplast thylakoid membrane. Its function is as follows. Component of the cytochrome b6-f complex, which mediates electron transfer between photosystem II (PSII) and photosystem I (PSI), cyclic electron flow around PSI, and state transitions. This Pelargonium hortorum (Common geranium) protein is Cytochrome f.